The sequence spans 699 residues: Elongation factor G 1 (699 aa).

Residues Glu-8–Ser-290 form the tr-type G domain. GTP contacts are provided by residues Ala-17–Thr-24, Asp-88–His-92, and Asn-142–Asp-145.

The protein belongs to the TRAFAC class translation factor GTPase superfamily. Classic translation factor GTPase family. EF-G/EF-2 subfamily.

It is found in the cytoplasm. Catalyzes the GTP-dependent ribosomal translocation step during translation elongation. During this step, the ribosome changes from the pre-translocational (PRE) to the post-translocational (POST) state as the newly formed A-site-bound peptidyl-tRNA and P-site-bound deacylated tRNA move to the P and E sites, respectively. Catalyzes the coordinated movement of the two tRNA molecules, the mRNA and conformational changes in the ribosome. The protein is Elongation factor G 1 of Vibrio parahaemolyticus serotype O3:K6 (strain RIMD 2210633).